The primary structure comprises 173 residues: S-ribosylhomocysteine lyase (173 aa).

Residues His54, His58, and Cys128 each coordinate Fe cation.

Belongs to the LuxS family. Homodimer. The cofactor is Fe cation.

It catalyses the reaction S-(5-deoxy-D-ribos-5-yl)-L-homocysteine = (S)-4,5-dihydroxypentane-2,3-dione + L-homocysteine. In terms of biological role, involved in the synthesis of autoinducer 2 (AI-2) which is secreted by bacteria and is used to communicate both the cell density and the metabolic potential of the environment. The regulation of gene expression in response to changes in cell density is called quorum sensing. Catalyzes the transformation of S-ribosylhomocysteine (RHC) to homocysteine (HC) and 4,5-dihydroxy-2,3-pentadione (DPD). This chain is S-ribosylhomocysteine lyase, found in Hydrogenovibrio crunogenus (strain DSM 25203 / XCL-2) (Thiomicrospira crunogena).